Consider the following 375-residue polypeptide: MKYELIKKQGRARRGQLQFDRGTVETPAFMPVGTYGTVKGMTPEEVKGTGAEILLGNTFHLWLRPGQEIMKLHGDLHDFMNWKGPILTDSGGFQVFSLGKTRKITEEGVHFRSPVNGDKIFMDAEKSMQIQYDLGSDVVMIFDECTPYPATHDEARISMERSIRWAERSRNEFDRQENPNALFGIVQGGVYEDLRDVSVEALTKIGFDGYAVGGLAVGEPKEDMHRILEHTCPQLPEDKPRYLMGVGKPEDLVEGVRRGIDMFDCVMPTRNARNGHLFVTGGVIKIRNAKHKTDTTPLDPECDCYTCQNYSKSYLHHLDRCNEILGARLNTIHNLRYYQRIMASIRKALEEDRFEQFVEEFYARRDREVPPLKDL.

Asp-89 functions as the Proton acceptor in the catalytic mechanism. Substrate contacts are provided by residues 89–93 (DSGGF), Asp-143, Gln-187, and Gly-214. The tract at residues 245–251 (GVGKPED) is RNA binding. The active-site Nucleophile is Asp-264. Residues 269–273 (TRNAR) are RNA binding; important for wobble base 34 recognition. Positions 302, 304, 307, and 333 each coordinate Zn(2+).

The protein belongs to the queuine tRNA-ribosyltransferase family. Homodimer. Within each dimer, one monomer is responsible for RNA recognition and catalysis, while the other monomer binds to the replacement base PreQ1. Zn(2+) serves as cofactor.

The catalysed reaction is 7-aminomethyl-7-carbaguanine + guanosine(34) in tRNA = 7-aminomethyl-7-carbaguanosine(34) in tRNA + guanine. Its pathway is tRNA modification; tRNA-queuosine biosynthesis. In terms of biological role, catalyzes the base-exchange of a guanine (G) residue with the queuine precursor 7-aminomethyl-7-deazaguanine (PreQ1) at position 34 (anticodon wobble position) in tRNAs with GU(N) anticodons (tRNA-Asp, -Asn, -His and -Tyr). Catalysis occurs through a double-displacement mechanism. The nucleophile active site attacks the C1' of nucleotide 34 to detach the guanine base from the RNA, forming a covalent enzyme-RNA intermediate. The proton acceptor active site deprotonates the incoming PreQ1, allowing a nucleophilic attack on the C1' of the ribose to form the product. After dissociation, two additional enzymatic reactions on the tRNA convert PreQ1 to queuine (Q), resulting in the hypermodified nucleoside queuosine (7-(((4,5-cis-dihydroxy-2-cyclopenten-1-yl)amino)methyl)-7-deazaguanosine). This is Queuine tRNA-ribosyltransferase from Aliivibrio fischeri (strain ATCC 700601 / ES114) (Vibrio fischeri).